The primary structure comprises 169 residues: Large ribosomal subunit protein bL9 (169 aa).

Belongs to the bacterial ribosomal protein bL9 family.

In terms of biological role, binds to the 23S rRNA. In Chlamydia pneumoniae (Chlamydophila pneumoniae), this protein is Large ribosomal subunit protein bL9.